The following is a 336-amino-acid chain: Eukaryotic translation initiation factor 3 subunit I (336 aa).

5 WD repeats span residues 8–47 (GHER…RLGT), 50–91 (GHLG…KVWE), 146–185 (CTES…QLEN), 190–229 (EFDH…ILKT), and 287–326 (GHFG…FDFM).

This sequence belongs to the eIF-3 subunit I family. Component of the eukaryotic translation initiation factor 3 (eIF-3) complex.

It localises to the cytoplasm. Its function is as follows. Component of the eukaryotic translation initiation factor 3 (eIF-3) complex, which is involved in protein synthesis of a specialized repertoire of mRNAs and, together with other initiation factors, stimulates binding of mRNA and methionyl-tRNAi to the 40S ribosome. The eIF-3 complex specifically targets and initiates translation of a subset of mRNAs involved in cell proliferation. The chain is Eukaryotic translation initiation factor 3 subunit I (tif34) from Emericella nidulans (strain FGSC A4 / ATCC 38163 / CBS 112.46 / NRRL 194 / M139) (Aspergillus nidulans).